Here is a 448-residue protein sequence, read N- to C-terminus: Exodeoxyribonuclease 7 large subunit (448 aa).

This sequence belongs to the XseA family. In terms of assembly, heterooligomer composed of large and small subunits.

Its subcellular location is the cytoplasm. The catalysed reaction is Exonucleolytic cleavage in either 5'- to 3'- or 3'- to 5'-direction to yield nucleoside 5'-phosphates.. In terms of biological role, bidirectionally degrades single-stranded DNA into large acid-insoluble oligonucleotides, which are then degraded further into small acid-soluble oligonucleotides. The protein is Exodeoxyribonuclease 7 large subunit of Shewanella sp. (strain MR-7).